The primary structure comprises 515 residues: Envelope glycoprotein (515 aa).

The signal sequence occupies residues 1-33; sequence MPKERRSRRRPQPIIRWVSLTLTLLSLCQPIQT. Residues 34–435 are Extracellular-facing; sequence WRCSLSLGNQ…LGLTAWVRET (402 aa). N-linked (GlcNAc...) asparagine; by host glycosylation is found at Asn-129 and Asn-203. The CXXC motif lies at 212-215; it reads CAIC. 3 disulfides stabilise this stretch: Cys-212–Cys-215, Cys-212–Cys-392, and Cys-384–Cys-391. N-linked (GlcNAc...) asparagine; by host glycosylation is found at Asn-230, Asn-251, Asn-256, Asn-271, and Asn-287. A fusion peptide region spans residues 304 to 324; that stretch reads AAALTLGLALSVGLTGINVAV. 2 coiled-coil regions span residues 330 to 376 and 388 to 420; these read QRLT…WLYI and NEPC…DWQW. Asn-351 carries an N-linked (GlcNAc...) asparagine; by host glycan. Residues 365-381 form an immunosuppression region; it reads AQNRRGLDWLYIRLGFQ. The short motif at 384–392 is the CX6CC element; sequence CPTINEPCC. An N-linked (GlcNAc...) asparagine; by host glycan is attached at Asn-398. A helical membrane pass occupies residues 436-456; the sequence is IHSVLSLFLLALFLLFLAPCL. Cys-455 carries the S-palmitoyl cysteine; by host lipid modification. Over 457 to 515 the chain is Cytoplasmic; it reads IKCLTSRLLKLLRQAPHFPEISLAPKPDSDYQALLPSAPEIYSHLSPTKPDYINLRPCP.

In terms of assembly, the mature envelope protein (Env) consists of a trimer of SU-TM heterodimers attached by a labile interchain disulfide bond. In terms of processing, specific enzymatic cleavages in vivo yield mature proteins. Envelope glycoproteins are synthesized as an inactive precursor that is N-glycosylated and processed likely by host cell furin or by a furin-like protease in the Golgi to yield the mature SU and TM proteins. The cleavage site between SU and TM requires the minimal sequence [KR]-X-[KR]-R. Post-translationally, the CXXC motif is highly conserved across a broad range of retroviral envelope proteins. It is thought to participate in the formation of a labile disulfide bond possibly with the CX6CC motif present in the transmembrane protein. Isomerization of the intersubunit disulfide bond to an SU intrachain disulfide bond is thought to occur upon receptor recognition in order to allow membrane fusion. The transmembrane protein is palmitoylated.

Its subcellular location is the virion membrane. The protein localises to the host cell membrane. In terms of biological role, the surface protein (SU) attaches the virus to the host cell by binding to its receptor. This interaction triggers the refolding of the transmembrane protein (TM) and is thought to activate its fusogenic potential by unmasking its fusion peptide. Fusion occurs at the host cell plasma membrane. Its function is as follows. The transmembrane protein (TM) acts as a class I viral fusion protein. Under the current model, the protein has at least 3 conformational states: pre-fusion native state, pre-hairpin intermediate state, and post-fusion hairpin state. During viral and target cell membrane fusion, the coiled coil regions (heptad repeats) assume a trimer-of-hairpins structure, positioning the fusion peptide in close proximity to the C-terminal region of the ectodomain. The formation of this structure appears to drive apposition and subsequent fusion of viral and target cell membranes. Membranes fusion leads to delivery of the nucleocapsid into the cytoplasm. The chain is Envelope glycoprotein (env) from Bovine leukemia virus (isolate Belgium LB285) (BLV).